The primary structure comprises 238 residues: Pyridoxine 5'-phosphate synthase (238 aa).

Asparagine 9 contributes to the 3-amino-2-oxopropyl phosphate binding site. 11–12 (DH) contacts 1-deoxy-D-xylulose 5-phosphate. Arginine 20 provides a ligand contact to 3-amino-2-oxopropyl phosphate. The active-site Proton acceptor is the histidine 45. Positions 47 and 52 each coordinate 1-deoxy-D-xylulose 5-phosphate. The active-site Proton acceptor is glutamate 72. A 1-deoxy-D-xylulose 5-phosphate-binding site is contributed by threonine 102. Histidine 189 acts as the Proton donor in catalysis. 3-amino-2-oxopropyl phosphate contacts are provided by residues glycine 190 and 211–212 (GH).

It belongs to the PNP synthase family. In terms of assembly, homooctamer; tetramer of dimers.

It is found in the cytoplasm. The enzyme catalyses 3-amino-2-oxopropyl phosphate + 1-deoxy-D-xylulose 5-phosphate = pyridoxine 5'-phosphate + phosphate + 2 H2O + H(+). Its pathway is cofactor biosynthesis; pyridoxine 5'-phosphate biosynthesis; pyridoxine 5'-phosphate from D-erythrose 4-phosphate: step 5/5. Its function is as follows. Catalyzes the complicated ring closure reaction between the two acyclic compounds 1-deoxy-D-xylulose-5-phosphate (DXP) and 3-amino-2-oxopropyl phosphate (1-amino-acetone-3-phosphate or AAP) to form pyridoxine 5'-phosphate (PNP) and inorganic phosphate. This is Pyridoxine 5'-phosphate synthase from Ehrlichia ruminantium (strain Gardel).